The chain runs to 309 residues: Glutaminase (309 aa).

Positions 64, 114, 160, 167, 191, 243, and 261 each coordinate substrate.

This sequence belongs to the glutaminase family. Homotetramer.

The enzyme catalyses L-glutamine + H2O = L-glutamate + NH4(+). The protein is Glutaminase of Rhizobium rhizogenes (strain K84 / ATCC BAA-868) (Agrobacterium radiobacter).